We begin with the raw amino-acid sequence, 517 residues long: GMP synthase [glutamine-hydrolyzing] (517 aa).

Positions 11-202 constitute a Glutamine amidotransferase type-1 domain; the sequence is KIIVLDFGSQ…AFKVCGAKAN (192 aa). C88 acts as the Nucleophile in catalysis. Catalysis depends on residues H176 and E178. Residues 203–392 form the GMPS ATP-PPase domain; the sequence is WTMDDFIEMQ…LGIPHDLVWR (190 aa). 230-236 contacts ATP; the sequence is SGGVDSS.

Homodimer.

The catalysed reaction is XMP + L-glutamine + ATP + H2O = GMP + L-glutamate + AMP + diphosphate + 2 H(+). It participates in purine metabolism; GMP biosynthesis; GMP from XMP (L-Gln route): step 1/1. Its function is as follows. Catalyzes the synthesis of GMP from XMP. In Lactobacillus johnsonii (strain CNCM I-12250 / La1 / NCC 533), this protein is GMP synthase [glutamine-hydrolyzing].